The primary structure comprises 313 residues: Porphobilinogen deaminase (313 aa).

Cys-242 bears the S-(dipyrrolylmethanemethyl)cysteine mark.

The protein belongs to the HMBS family. As to quaternary structure, monomer. The cofactor is dipyrromethane.

It carries out the reaction 4 porphobilinogen + H2O = hydroxymethylbilane + 4 NH4(+). Its pathway is porphyrin-containing compound metabolism; protoporphyrin-IX biosynthesis; coproporphyrinogen-III from 5-aminolevulinate: step 2/4. Functionally, tetrapolymerization of the monopyrrole PBG into the hydroxymethylbilane pre-uroporphyrinogen in several discrete steps. This chain is Porphobilinogen deaminase, found in Yersinia pestis bv. Antiqua (strain Angola).